Reading from the N-terminus, the 488-residue chain is Cytochrome P450 monooxygenase orf2 (488 aa).

Residues 7–27 (LPGIFLPLAGCVLALSLTTIV) form a helical membrane-spanning segment. Cys432 contacts heme.

Belongs to the cytochrome P450 family. The cofactor is heme.

The protein resides in the membrane. Its pathway is secondary metabolite biosynthesis. Functionally, cytochrome P450 monooxygenase; part of the gene cluster that mediates the biosynthesis of nigerpyrone and its derivatives carbonarone A and pestalamide A. The biosynthesis pathway begins with the polyketide assembly by epaA to form phenylacetyl triketide precursor from successive condensation of two malonyl-CoA, presumably with one phenylacetyl-CoA starter unit produced by the phenylacetyl-CoA ligase epaB. For the nigerpyrone biosynthesis, the reactive polyketide chain is released as an aldehyde through the R-domain. A nonenzymatic cyclization and dehydration may create nigerpyrone. For the biosynthesis of carbonarone A and pestalamide A, an extra methyl group is added through the C-methyltransferase domain. Several further steps involving the dehydrogenase orf1, the cytochrome P450 monooxygenase orf2 and the FAD-dependent monooxygenase orf3 are required to form a carbonarone A precursor which is converted to carbonarone A via cyclization. The O-acetyltransferase epaC could catalyze the transfer of 2-methylsuccinyl-CoA, a common intermediate in the ethylmalonyl-CoA pathway, to generate the final product pestalamide A. This chain is Cytochrome P450 monooxygenase orf2, found in Aspergillus niger (strain ATCC MYA-4892 / CBS 513.88 / FGSC A1513).